The following is a 418-amino-acid chain: MIISKDRKLVVGLEIGTTKVVTLVGEVLIDDNIKIIGFGTCLSKGIDKGKINNLDLIVSCIQESINKAEIMADCQITSVYLSLSNKYINCQNEIGIIPISDDEVTKEDIEHVIHIAQSVQILNEHHILHVIPQEYSIDQQYGIKNPIGLSGVRMQVKVHLITCHQNMARNIIKAVEKCDVKVDQVIFSGLASSKAVLTEDECNLGVCMIDIGGGTIDFTIYIDGSIKYSQVIPYAGNIVTSDISYAFSTSRDNAENIKIKYGSVKKPPLGSSKNIDFSDINCNFQQNLQQDALIDVIESRYVELLSLVQDQIVHLQKKLHKKGEKYELLSGIVLTGGGSNISCLTDCAEKVFQKKVRVAKPFNISGLIEKITEPCYSTVIGLLHYGKESYINIDKKKKEHSFFEIIFKRINNWFKKEF.

This sequence belongs to the FtsA/MreB family. In terms of assembly, self-interacts. Interacts with FtsZ.

Its subcellular location is the cell inner membrane. In terms of biological role, cell division protein that is involved in the assembly of the Z ring. May serve as a membrane anchor for the Z ring. This Buchnera aphidicola subsp. Acyrthosiphon pisum (strain APS) (Acyrthosiphon pisum symbiotic bacterium) protein is Cell division protein FtsA.